The chain runs to 298 residues: Junctional adhesion molecule B (298 aa).

Positions 1-28 (MARRSRHRLLLLLLRYLVVALGYHKAYG) are cleaved as a signal peptide. Over 29–238 (FSAPKDQQVV…RMQVDDLNIS (210 aa)) the chain is Extracellular. One can recognise an Ig-like V-type domain in the interval 32–127 (PKDQQVVTAV…GQNLEEDTVT (96 aa)). 2 disulfides stabilise this stretch: Cys-50–Cys-109 and Cys-155–Cys-214. Asn-98, Asn-187, and Asn-236 each carry an N-linked (GlcNAc...) asparagine glycan. An Ig-like C2-type domain is found at 134-238 (PAVPSCEVPS…RMQVDDLNIS (105 aa)). A helical transmembrane segment spans residues 239–259 (GIIAAVVVVALVISVCGLGVC). Residues 260-298 (YAQRKGYFSKETSFQKSNSSSKATTMSENDFKHTKSFII) lie on the Cytoplasmic side of the membrane.

The protein belongs to the immunoglobulin superfamily. Highly expressed in heart, placenta, lung, foreskin and lymph node. Prominently expressed on high endothelial venules and also present on the endothelia of other vessels (at protein level). Also expressed in the brain in the caudate nuclei.

It localises to the cell membrane. The protein localises to the cell junction. The protein resides in the tight junction. Its function is as follows. Junctional adhesion protein that mediates heterotypic cell-cell interactions with its cognate receptor JAM3 to regulate different cellular processes. Plays a role in homing and mobilization of hematopoietic stem and progenitor cells within the bone marrow. At the surface of bone marrow stromal cells, it contributes to the retention of the hematopoietic stem and progenitor cells expressing JAM3. Plays a central role in leukocytes extravasation by facilitating not only transmigration but also tethering and rolling of leukocytes along the endothelium. Tethering and rolling of leukocytes are dependent on the binding by JAM2 of the integrin alpha-4/beta-1. Plays a role in spermatogenesis where JAM2 and JAM3, which are respectively expressed by Sertoli and germ cells, mediate an interaction between both cell types and play an essential role in the anchorage of germ cells onto Sertoli cells and the assembly of cell polarity complexes during spermatid differentiation. Also functions as an inhibitory somatodendritic cue that prevents the myelination of non-axonal parts of neurons. During myogenesis, it is involved in myocyte fusion. May also play a role in angiogenesis. This chain is Junctional adhesion molecule B, found in Homo sapiens (Human).